A 344-amino-acid polypeptide reads, in one-letter code: Dihydroorotate dehydrogenase (quinone) (344 aa).

FMN is bound by residues 61–65 and threonine 85; that span reads AGLDK. Lysine 65 lines the substrate pocket. Residue 110–114 participates in substrate binding; that stretch reads NRMGF. Asparagine 138 and asparagine 171 together coordinate FMN. Asparagine 171 is a substrate binding site. Serine 174 (nucleophile) is an active-site residue. Asparagine 176 contributes to the substrate binding site. The FMN site is built by lysine 216 and threonine 244. Residue 245-246 participates in substrate binding; that stretch reads NT. FMN is bound by residues glycine 267, glycine 296, and 317-318; that span reads YS.

It belongs to the dihydroorotate dehydrogenase family. Type 2 subfamily. Monomer. It depends on FMN as a cofactor.

It is found in the cell membrane. The enzyme catalyses (S)-dihydroorotate + a quinone = orotate + a quinol. The protein operates within pyrimidine metabolism; UMP biosynthesis via de novo pathway; orotate from (S)-dihydroorotate (quinone route): step 1/1. Catalyzes the conversion of dihydroorotate to orotate with quinone as electron acceptor. The polypeptide is Dihydroorotate dehydrogenase (quinone) (Psychrobacter arcticus (strain DSM 17307 / VKM B-2377 / 273-4)).